Here is an 822-residue protein sequence, read N- to C-terminus: Telomere length regulation protein TEL2 homolog (822 aa).

Positions 442 to 504 are disordered; sequence NDDEEEQPDA…ADQEKKKSAP (63 aa). The segment covering 465-477 has biased composition (polar residues); sequence VSSQSVASDPGNG. A compositionally biased stretch (acidic residues) spans 480 to 489; sequence SELDSDDDLT.

This sequence belongs to the TEL2 family.

It localises to the cytoplasm. The protein resides in the membrane. The protein localises to the nucleus. Regulator of the DNA damage response (DDR). Part of the TTT complex that is required to stabilize protein levels of the phosphatidylinositol 3-kinase-related protein kinase (PIKK) family proteins. Promotes assembly, stabilizes and maintains the activity of TORC complexes, which regulate cell growth and survival in response to nutrient and hormonal signals. May be involved in telomere length regulation. This is Telomere length regulation protein TEL2 homolog (telo2) from Danio rerio (Zebrafish).